The sequence spans 452 residues: MAFSVVVLAAGKGTRMKSSLPKVLHKVGGVPMVQRIINTVRSLGADNIHLVYGHGGDQLKATVVEENLNWCLQAEQLGTGHAVQQAAPHINDDEDVLILVGDAPLIREDTLSALKAVKESCDLALLTVNLDDPTGMGRIIRENDNITAIVEHKDATEAQRAIKEINTGMMMMSGADLKRWLGELSNDNAQGEYYLTDVIAMAASEGKRIQSAQPQSAVEVEGVNNRLQLANLERALQNRQADELMTNGVTLLDPSRFDLRGTLQTGNDVIIDVNVIVEGDVTLGNNVEIGANCILRNCTIADNAVIEANSIIEEARVGEACTVGPYARLRPGAVMQKNAKVGNFVEMKKAVLGEGAKANHLTYLGDAEVGAKANIGAGTITCNYDGVNKSKTVIGENAFIGSNSSLVAPVNIGKGATVGAGSVITSTVDEAALAVARGKQRNIPNWPRPTKK.

Residues 1 to 226 are pyrophosphorylase; sequence MAFSVVVLAA…AVEVEGVNNR (226 aa). Residues 8-11, lysine 22, glutamine 73, and 78-79 each bind UDP-N-acetyl-alpha-D-glucosamine; these read LAAG and GT. Residue aspartate 102 coordinates Mg(2+). Glycine 137, glutamate 151, asparagine 166, and asparagine 224 together coordinate UDP-N-acetyl-alpha-D-glucosamine. Mg(2+) is bound at residue asparagine 224. The segment at 227-247 is linker; the sequence is LQLANLERALQNRQADELMTN. Positions 248–452 are N-acetyltransferase; it reads GVTLLDPSRF…IPNWPRPTKK (205 aa). Residues arginine 330 and lysine 348 each coordinate UDP-N-acetyl-alpha-D-glucosamine. The active-site Proton acceptor is histidine 360. Residues tyrosine 363 and asparagine 374 each contribute to the UDP-N-acetyl-alpha-D-glucosamine site. Residues alanine 377, 383-384, serine 402, alanine 420, and arginine 437 contribute to the acetyl-CoA site; that span reads NY.

In the N-terminal section; belongs to the N-acetylglucosamine-1-phosphate uridyltransferase family. The protein in the C-terminal section; belongs to the transferase hexapeptide repeat family. As to quaternary structure, homotrimer. The cofactor is Mg(2+).

The protein resides in the cytoplasm. It catalyses the reaction alpha-D-glucosamine 1-phosphate + acetyl-CoA = N-acetyl-alpha-D-glucosamine 1-phosphate + CoA + H(+). It carries out the reaction N-acetyl-alpha-D-glucosamine 1-phosphate + UTP + H(+) = UDP-N-acetyl-alpha-D-glucosamine + diphosphate. The protein operates within nucleotide-sugar biosynthesis; UDP-N-acetyl-alpha-D-glucosamine biosynthesis; N-acetyl-alpha-D-glucosamine 1-phosphate from alpha-D-glucosamine 6-phosphate (route II): step 2/2. It functions in the pathway nucleotide-sugar biosynthesis; UDP-N-acetyl-alpha-D-glucosamine biosynthesis; UDP-N-acetyl-alpha-D-glucosamine from N-acetyl-alpha-D-glucosamine 1-phosphate: step 1/1. It participates in bacterial outer membrane biogenesis; LPS lipid A biosynthesis. Functionally, catalyzes the last two sequential reactions in the de novo biosynthetic pathway for UDP-N-acetylglucosamine (UDP-GlcNAc). The C-terminal domain catalyzes the transfer of acetyl group from acetyl coenzyme A to glucosamine-1-phosphate (GlcN-1-P) to produce N-acetylglucosamine-1-phosphate (GlcNAc-1-P), which is converted into UDP-GlcNAc by the transfer of uridine 5-monophosphate (from uridine 5-triphosphate), a reaction catalyzed by the N-terminal domain. This chain is Bifunctional protein GlmU, found in Alteromonas mediterranea (strain DSM 17117 / CIP 110805 / LMG 28347 / Deep ecotype).